A 509-amino-acid polypeptide reads, in one-letter code: Aspartyl/glutamyl-tRNA(Asn/Gln) amidotransferase subunit B (509 aa).

Belongs to the GatB/GatE family. GatB subfamily. Heterotrimer of A, B and C subunits.

It catalyses the reaction L-glutamyl-tRNA(Gln) + L-glutamine + ATP + H2O = L-glutaminyl-tRNA(Gln) + L-glutamate + ADP + phosphate + H(+). The enzyme catalyses L-aspartyl-tRNA(Asn) + L-glutamine + ATP + H2O = L-asparaginyl-tRNA(Asn) + L-glutamate + ADP + phosphate + 2 H(+). In terms of biological role, allows the formation of correctly charged Asn-tRNA(Asn) or Gln-tRNA(Gln) through the transamidation of misacylated Asp-tRNA(Asn) or Glu-tRNA(Gln) in organisms which lack either or both of asparaginyl-tRNA or glutaminyl-tRNA synthetases. The reaction takes place in the presence of glutamine and ATP through an activated phospho-Asp-tRNA(Asn) or phospho-Glu-tRNA(Gln). This is Aspartyl/glutamyl-tRNA(Asn/Gln) amidotransferase subunit B from Psychrobacter cryohalolentis (strain ATCC BAA-1226 / DSM 17306 / VKM B-2378 / K5).